The following is a 421-amino-acid chain: MTADLLLTHFNQVFCPNDLGHPLFGAEMKEARVLEDGYIAVKDGKILAVGSGEPDASLIGPDTKIQSYEGKIATPGLIDCHTHLVYGGSREHEFAKKLAGVPYLEILAQGGGILSTVRATREASFENLYDKSKKLLDYMLLHGVTTVEAKSGYGLNWETEKRQLDVVGALDRDHEIDLVSTFMAAHAVPPEYKGRSQEYLELIVEEMLPRVKEENLAEFCDIFCEKGVFTADESRYLLSKAKEMGFKLRIHADEIESIGGVDVAAELGATSAEHLMMATDEGIRKMAEAKVIGNLLPATTFSLMEDTYAPARKMLEAGMAITLTTDSNPGSCPTANLQFVMQLGCFMMRLTPVEVLNAVTINAAYSVNRQDKIGSFDTGKQADITILDAKNIDYPLYFFATNLTHQVYKAGKLVVDQGRIV.

Residues histidine 81 and histidine 83 each contribute to the Fe(3+) site. Residues histidine 81 and histidine 83 each coordinate Zn(2+). Positions 90, 153, and 186 each coordinate 4-imidazolone-5-propanoate. An N-formimidoyl-L-glutamate-binding site is contributed by tyrosine 153. A Fe(3+)-binding site is contributed by histidine 251. Residue histidine 251 coordinates Zn(2+). Glutamate 254 is a 4-imidazolone-5-propanoate binding site. Aspartate 326 is a binding site for Fe(3+). Residue aspartate 326 participates in Zn(2+) binding. Asparagine 328 and glycine 330 together coordinate N-formimidoyl-L-glutamate. Serine 331 is a 4-imidazolone-5-propanoate binding site.

This sequence belongs to the metallo-dependent hydrolases superfamily. HutI family. Zn(2+) is required as a cofactor. It depends on Fe(3+) as a cofactor.

It is found in the cytoplasm. The catalysed reaction is 4-imidazolone-5-propanoate + H2O = N-formimidoyl-L-glutamate. The protein operates within amino-acid degradation; L-histidine degradation into L-glutamate; N-formimidoyl-L-glutamate from L-histidine: step 3/3. Catalyzes the hydrolytic cleavage of the carbon-nitrogen bond in imidazolone-5-propanoate to yield N-formimidoyl-L-glutamate. It is the third step in the universal histidine degradation pathway. This is Imidazolonepropionase from Streptococcus gordonii (strain Challis / ATCC 35105 / BCRC 15272 / CH1 / DL1 / V288).